The primary structure comprises 106 residues: Large ribosomal subunit protein uL24 (106 aa).

Residues Ser69 to Lys106 are disordered.

It belongs to the universal ribosomal protein uL24 family. As to quaternary structure, part of the 50S ribosomal subunit.

Its function is as follows. One of two assembly initiator proteins, it binds directly to the 5'-end of the 23S rRNA, where it nucleates assembly of the 50S subunit. In terms of biological role, one of the proteins that surrounds the polypeptide exit tunnel on the outside of the subunit. The sequence is that of Large ribosomal subunit protein uL24 from Bacteroides fragilis (strain ATCC 25285 / DSM 2151 / CCUG 4856 / JCM 11019 / LMG 10263 / NCTC 9343 / Onslow / VPI 2553 / EN-2).